The sequence spans 378 residues: O-glycoside alpha-1,2-mannosyltransferase homolog 3 (378 aa).

The Cytoplasmic segment spans residues 1–6; the sequence is MGIPKS. Residues 7 to 24 form a helical; Signal-anchor for type II membrane protein membrane-spanning segment; it reads SIYFCILLFCIISFYLQS. Over 25–378 the chain is Lumenal; the sequence is SKDGPKELKV…AIKWLENINS (354 aa). Glu-276 (nucleophile) is an active-site residue.

This sequence belongs to the glycosyltransferase 15 family.

It localises to the endoplasmic reticulum membrane. The protein localises to the golgi apparatus membrane. Its function is as follows. Probable mannosyltransferase involved in O-glycosylation of cell wall and secreted proteins. In Schizosaccharomyces pombe (strain 972 / ATCC 24843) (Fission yeast), this protein is O-glycoside alpha-1,2-mannosyltransferase homolog 3 (omh3).